The sequence spans 579 residues: Vitamin B6 transporter TPN1 (579 aa).

Transmembrane regions (helical) follow at residues 99–119 (TGGL…GLSF), 123–143 (LASS…CSIM), 158–178 (LFGW…VMGW), 199–219 (PLWV…IFGI), 222–242 (VIKV…LLYI), 275–295 (LCYS…ILFP), 303–323 (IFCL…ILGL), 363–383 (VVVL…SAAF), 395–415 (IPRW…ALIG), 422–442 (ILGN…ILLF), 520–540 (FAFI…YWIG), and 546–566 (FGEY…GVVY).

Belongs to the purine-cytosine permease (2.A.39) family.

It is found in the membrane. Its function is as follows. Thiamine-regulated, high affinity import carrier of pyridoxine, pyridoxal and pyridoxamine. The sequence is that of Vitamin B6 transporter TPN1 (TPN1) from Saccharomyces cerevisiae (Baker's yeast).